Reading from the N-terminus, the 643-residue chain is Ecto-NOX disulfide-thiol exchanger 1 (643 aa).

Residues 142–221 (KTVFVGGLPE…GRLHVDFAQA (80 aa)) form the RRM domain. Coiled coils occupy residues 307–342 (VQSA…LTGI) and 425–570 (QAYA…EALL).

It belongs to the ENOX family. The cofactor is Cu cation. As to expression, expressed in lymphocyte cells, breast and breast cancer (at protein level). Found in the sera of cancer patients with a wide variety of cancers including breast, prostate, lung and ovarian cancers, leukemias, and lymphomas. Found also in the serum of healthy volunteers or patients with disorders other than cancer. Probably shed into serum by cancer cells.

Its subcellular location is the cell membrane. The protein localises to the secreted. The protein resides in the extracellular space. Its activity is regulated as follows. Not inhibited by the antitumor sulfonylurea LY181984, the vabilloid capsaicin, and retinoids. Probably acts as a terminal oxidase of plasma electron transport from cytosolic NAD(P)H via hydroquinones to acceptors at the cell surface. Hydroquinone oxidase activity alternates with a protein disulfide-thiol interchange/oxidoreductase activity which may control physical membrane displacements associated with vesicle budding or cell enlargement. The activities oscillate with a period length of 24 minutes and play a role in control of the ultradian cellular biological clock. The chain is Ecto-NOX disulfide-thiol exchanger 1 (ENOX1) from Homo sapiens (Human).